We begin with the raw amino-acid sequence, 84 residues long: MTNLSDIIEKETGKQLVIQESILMLPEEVEEVIGNKPESDILVHTAYDESTDENVMLLTSDAPEYKPWALVIQDSNGENKIKML.

Its function is as follows. This protein binds specifically and reversibly to the host uracil-DNA glycosylase, preventing removal of uracil residues from PBS2 DNA by the host uracil-excision repair system. This is Uracil-DNA glycosylase inhibitor (UGI) from Bacillus subtilis (Bacteriophage PBS2).